Reading from the N-terminus, the 74-residue chain is MVHPRFVFFAFLALSVLLAVMNEDSILSSNKGDSLCCNDHPEFGICTNKSCNKWCLQGCTRGGFCKRKICHCYC.

A signal peptide spans 1–19; that stretch reads MVHPRFVFFAFLALSVLLA. 4 cysteine pairs are disulfide-bonded: Cys36–Cys74, Cys46–Cys65, Cys51–Cys70, and Cys55–Cys72.

It belongs to the DEFL family.

It is found in the secreted. The polypeptide is Putative defensin-like protein 27 (Arabidopsis thaliana (Mouse-ear cress)).